The chain runs to 355 residues: (3aS,4S,5R,7aS)-5-hydroxy-7a-methyl-1-oxo-octahydro-1H-indene-4-carboxyl-CoA dehydrogenase (355 aa).

Residues 21–23 (GMG), 173–175 (AGG), and 196–197 (GT) contribute to the FMN site.

The protein belongs to the nitronate monooxygenase family.

It carries out the reaction (3aS,4S,5R,7aS)-5-hydroxy-7a-methyl-1-oxo-octahydro-1H-indene-4-carboxyl-CoA + NAD(+) = (5R,7aS)-5-hydroxy-7a-methyl-1-oxo-2,3,5,6,7,7a-hexahydro-1H-indene-carboxyl-CoA + NADH + H(+). It participates in steroid metabolism; cholesterol degradation. Its activity is regulated as follows. Requires the presence of IpdF. Involved in the final steps of cholesterol and steroid degradation. Probably catalyzes the introduction of a double bound into the C ring of 5OH-HIC-CoA, leading to the formation of (5R,7aS)-5-hydroxy-7a-methyl-1-oxo-3,5,6,7-tetrahydro-2H-indene-4-carboxyl-CoA. The polypeptide is (3aS,4S,5R,7aS)-5-hydroxy-7a-methyl-1-oxo-octahydro-1H-indene-4-carboxyl-CoA dehydrogenase (Mycobacterium tuberculosis (strain ATCC 25618 / H37Rv)).